We begin with the raw amino-acid sequence, 344 residues long: Phenylalanine--tRNA ligase alpha subunit (344 aa).

A Mg(2+)-binding site is contributed by glutamate 256.

The protein belongs to the class-II aminoacyl-tRNA synthetase family. Phe-tRNA synthetase alpha subunit type 1 subfamily. Tetramer of two alpha and two beta subunits. The cofactor is Mg(2+).

The protein localises to the cytoplasm. It catalyses the reaction tRNA(Phe) + L-phenylalanine + ATP = L-phenylalanyl-tRNA(Phe) + AMP + diphosphate + H(+). This chain is Phenylalanine--tRNA ligase alpha subunit, found in Geobacillus thermodenitrificans (strain NG80-2).